The primary structure comprises 295 residues: Elongation factor Ts (295 aa).

Residues 79–82 are involved in Mg(2+) ion dislocation from EF-Tu; sequence TDFV.

The protein belongs to the EF-Ts family.

It is found in the cytoplasm. Associates with the EF-Tu.GDP complex and induces the exchange of GDP to GTP. It remains bound to the aminoacyl-tRNA.EF-Tu.GTP complex up to the GTP hydrolysis stage on the ribosome. This Bacillus anthracis (strain A0248) protein is Elongation factor Ts.